The sequence spans 483 residues: MIMKNGIVYFVGAGPGDPGLLTIKGKQALKEADVILYDRLANPKLLEFASPDCQFIYCGKLPNRHFMKQKEINALLVEKALNGLTVVRLKGGDPSVFGRVGEEADALHEHGIRYEMVPGITSGIAAPLYAGIPVTHRDFASSFAMITAHDKSLKGTPNLDWEGLARSVQTLVFYMGVKNLSYICQQLISYGKSPSVPVIVIQWGTWGRQRSVKGTLENIQQKVQEHQITNPAIIVIGDIVNFQTHSWFESKPLIGRHLMVVTHGEDEDPLADKLRDSGADLIEWPKWRTENMPVNEEILRKIGTFEDVFFTSRRAVCEFFRALASQKIDIRQLTAKLSAASEQAKTELEKRGFLVTAIQPDSEKRLVVGSRHAVENMQKHESCSFYITHENVIDDRFTHMIQRTISESPLHMVICPNKLSVQQLINGGEQIGILPEPSASRPPIVCIGDDSAAGIYGFTAVQEQDELLAFIHNQHAEKKLLHT.

Belongs to the precorrin methyltransferase family.

It catalyses the reaction uroporphyrinogen III + 2 S-adenosyl-L-methionine = precorrin-2 + 2 S-adenosyl-L-homocysteine + H(+). This Bacillus subtilis (strain 168) protein is Uroporphyrinogen-III C-methyltransferase (nasF).